Reading from the N-terminus, the 95-residue chain is Small ribosomal subunit protein bS18 (95 aa).

The protein belongs to the bacterial ribosomal protein bS18 family. As to quaternary structure, part of the 30S ribosomal subunit. Forms a tight heterodimer with protein bS6.

Binds as a heterodimer with protein bS6 to the central domain of the 16S rRNA, where it helps stabilize the platform of the 30S subunit. The polypeptide is Small ribosomal subunit protein bS18 (Ehrlichia ruminantium (strain Gardel)).